A 449-amino-acid polypeptide reads, in one-letter code: Keratin, type I cytoskeletal 27 (449 aa).

The head stretch occupies residues 1–73 (MSVRFSSASR…VNEHGLLSGN (73 aa)). The segment at 74-109 (EKVTMQNLNDRLASYLENVQALEEANADLEQKIKDW) is coil 1A. Residues 74 to 389 (EKVTMQNLND…LLIGGDEGSC (316 aa)) enclose the IF rod domain. A linker 1 region spans residues 110–131 (YEKFGPGSCRGLDHDYSRYFPI). The segment at 132 to 223 (IDDLRTQIIS…KNHEEEMQAL (92 aa)) is coil 1B. The segment at 224-246 (QCAAGGNVNVEMNAAPGVDLTVL) is linker 12. Residues 247 to 385 (LNNMRAEYEA…ETYCLLIGGD (139 aa)) form a coil 2 region. The tail stretch occupies residues 386-449 (EGSCVKSKGQ…NNKNEQRIPS (64 aa)). The disordered stretch occupies residues 425–449 (LSSRVHTLEEKSTKVNNKNEQRIPS). A compositionally biased stretch (basic and acidic residues) spans 430-449 (HTLEEKSTKVNNKNEQRIPS).

It belongs to the intermediate filament family. Heterotetramer of two type I and two type II keratins. Interacts with KRT6A to form filaments.

It is found in the cytoplasm. Functionally, essential for the proper assembly of type I and type II keratin protein complexes and formation of keratin intermediate filaments in the inner root sheath (irs). The chain is Keratin, type I cytoskeletal 27 from Rattus norvegicus (Rat).